A 147-amino-acid chain; its full sequence is Peptide deformylase (147 aa).

The Fe cation site is built by Cys-88 and His-130. Residue Glu-131 is part of the active site. His-134 contributes to the Fe cation binding site.

The protein belongs to the polypeptide deformylase family. Requires Fe(2+) as cofactor.

It catalyses the reaction N-terminal N-formyl-L-methionyl-[peptide] + H2O = N-terminal L-methionyl-[peptide] + formate. Functionally, removes the formyl group from the N-terminal Met of newly synthesized proteins. Requires at least a dipeptide for an efficient rate of reaction. N-terminal L-methionine is a prerequisite for activity but the enzyme has broad specificity at other positions. The polypeptide is Peptide deformylase (Clostridium botulinum (strain Alaska E43 / Type E3)).